The primary structure comprises 243 residues: GTP cyclohydrolase 1 type 2 (243 aa).

Residues H63, H64, D102, H209, and E213 each coordinate a divalent metal cation.

Belongs to the GTP cyclohydrolase I type 2/NIF3 family. In terms of assembly, homohexamer.

It catalyses the reaction GTP + H2O = 7,8-dihydroneopterin 3'-triphosphate + formate + H(+). It participates in cofactor biosynthesis; 7,8-dihydroneopterin triphosphate biosynthesis; 7,8-dihydroneopterin triphosphate from GTP: step 1/1. Its function is as follows. Converts GTP to dihydroneopterin triphosphate. The polypeptide is GTP cyclohydrolase 1 type 2 (Helicobacter pylori (strain J99 / ATCC 700824) (Campylobacter pylori J99)).